The following is a 538-amino-acid chain: Phosphoenolpyruvate carboxykinase (ATP) (538 aa).

The substrate site is built by Arg-64, Tyr-205, and Lys-211. Residues Lys-211, His-230, and 246 to 254 (GLSGTGKTT) contribute to the ATP site. Mn(2+)-binding residues include Lys-211 and His-230. Asp-267 contacts Mn(2+). ATP is bound by residues Glu-295, Arg-331, 447-448 (RI), and Thr-453. Arg-331 is a binding site for substrate.

Belongs to the phosphoenolpyruvate carboxykinase (ATP) family. In terms of assembly, monomer. The cofactor is Mn(2+).

It is found in the cytoplasm. The catalysed reaction is oxaloacetate + ATP = phosphoenolpyruvate + ADP + CO2. It participates in carbohydrate biosynthesis; gluconeogenesis. In terms of biological role, involved in the gluconeogenesis. Catalyzes the conversion of oxaloacetate (OAA) to phosphoenolpyruvate (PEP) through direct phosphoryl transfer between the nucleoside triphosphate and OAA. The protein is Phosphoenolpyruvate carboxykinase (ATP) of Pasteurella multocida (strain Pm70).